Consider the following 174-residue polypeptide: Interleukin-10 (174 aa).

The N-terminal stretch at 1–16 (MPTWMLLFCLLCVTSS) is a signal peptide. Residue Asn17 is glycosylated (N-linked (GlcNAc...) asparagine). 2 cysteine pairs are disulfide-bonded: Cys26–Cys122 and Cys76–Cys128.

Belongs to the IL-10 family. In terms of assembly, homodimer. Interacts with IL10RA and IL10RB.

It localises to the secreted. In terms of biological role, major immune regulatory cytokine that acts on many cells of the immune system where it has profound anti-inflammatory functions, limiting excessive tissue disruption caused by inflammation. Mechanistically, IL10 binds to its heterotetrameric receptor comprising IL10RA and IL10RB leading to JAK1 and STAT2-mediated phosphorylation of STAT3. In turn, STAT3 translocates to the nucleus where it drives expression of anti-inflammatory mediators. Targets antigen-presenting cells (APCs) such as macrophages and monocytes and inhibits their release of pro-inflammatory cytokines including granulocyte-macrophage colony-stimulating factor /GM-CSF, granulocyte colony-stimulating factor/G-CSF, IL-1 alpha, IL-1 beta, IL-6, IL-8 and TNF-alpha. Also interferes with antigen presentation by reducing the expression of MHC-class II and co-stimulatory molecules, thereby inhibiting their ability to induce T cell activation. In addition, controls the inflammatory response of macrophages by reprogramming essential metabolic pathways including mTOR signaling. This Trichosurus vulpecula (Brush-tailed possum) protein is Interleukin-10 (IL10).